The following is a 934-amino-acid chain: Bifunctional uridylyltransferase/uridylyl-removing enzyme (934 aa).

Residues 1 to 379 (MSAHDLKLEE…TFSRRKRKLS (379 aa)) form a uridylyltransferase region. The interval 380–736 (DDGAFISENH…AKPHAFEAVT (357 aa)) is uridylyl-removing. Positions 496 to 613 (VDEHLLRCIA…IDFADTVQTM (118 aa)) constitute an HD domain. 2 consecutive ACT domains span residues 737–818 (EITV…DMLA) and 848–931 (VIEV…RSPQ).

This sequence belongs to the GlnD family. Mg(2+) is required as a cofactor.

It carries out the reaction [protein-PII]-L-tyrosine + UTP = [protein-PII]-uridylyl-L-tyrosine + diphosphate. The catalysed reaction is [protein-PII]-uridylyl-L-tyrosine + H2O = [protein-PII]-L-tyrosine + UMP + H(+). Uridylyltransferase (UTase) activity is inhibited by glutamine, while glutamine activates uridylyl-removing (UR) activity. Modifies, by uridylylation and deuridylylation, the PII regulatory proteins (GlnB and homologs), in response to the nitrogen status of the cell that GlnD senses through the glutamine level. Under low glutamine levels, catalyzes the conversion of the PII proteins and UTP to PII-UMP and PPi, while under higher glutamine levels, GlnD hydrolyzes PII-UMP to PII and UMP (deuridylylation). Thus, controls uridylylation state and activity of the PII proteins, and plays an important role in the regulation of nitrogen assimilation and metabolism. This is Bifunctional uridylyltransferase/uridylyl-removing enzyme from Brucella suis biovar 1 (strain 1330).